Here is a 227-residue protein sequence, read N- to C-terminus: Cytochrome c oxidase subunit 2 (227 aa).

The Mitochondrial intermembrane segment spans residues 1–14; that stretch reads MAYPFQLGLQDATS. A helical membrane pass occupies residues 15-45; it reads PIMEELLHFHDHTLMIVFLISSLVLYIITLM. Over 46–59 the chain is Mitochondrial matrix; that stretch reads LTTKLTHTSTMDAQ. A helical membrane pass occupies residues 60–87; the sequence is EVETVWTILPAIILVLIALPSLRILYMM. Over 88 to 227 the chain is Mitochondrial intermembrane; sequence DEINNPSLTV…YFETWSALMV (140 aa). The Cu cation site is built by His-161, Cys-196, Glu-198, Cys-200, His-204, and Met-207. Glu-198 is a Mg(2+) binding site. Tyr-218 bears the Phosphotyrosine mark.

Belongs to the cytochrome c oxidase subunit 2 family. In terms of assembly, component of the cytochrome c oxidase (complex IV, CIV), a multisubunit enzyme composed of 14 subunits. The complex is composed of a catalytic core of 3 subunits MT-CO1, MT-CO2 and MT-CO3, encoded in the mitochondrial DNA, and 11 supernumerary subunits COX4I, COX5A, COX5B, COX6A, COX6B, COX6C, COX7A, COX7B, COX7C, COX8 and NDUFA4, which are encoded in the nuclear genome. The complex exists as a monomer or a dimer and forms supercomplexes (SCs) in the inner mitochondrial membrane with NADH-ubiquinone oxidoreductase (complex I, CI) and ubiquinol-cytochrome c oxidoreductase (cytochrome b-c1 complex, complex III, CIII), resulting in different assemblies (supercomplex SCI(1)III(2)IV(1) and megacomplex MCI(2)III(2)IV(2)). Found in a complex with TMEM177, COA6, COX18, COX20, SCO1 and SCO2. Interacts with TMEM177 in a COX20-dependent manner. Interacts with COX20. Interacts with COX16. Cu cation is required as a cofactor.

Its subcellular location is the mitochondrion inner membrane. The enzyme catalyses 4 Fe(II)-[cytochrome c] + O2 + 8 H(+)(in) = 4 Fe(III)-[cytochrome c] + 2 H2O + 4 H(+)(out). Functionally, component of the cytochrome c oxidase, the last enzyme in the mitochondrial electron transport chain which drives oxidative phosphorylation. The respiratory chain contains 3 multisubunit complexes succinate dehydrogenase (complex II, CII), ubiquinol-cytochrome c oxidoreductase (cytochrome b-c1 complex, complex III, CIII) and cytochrome c oxidase (complex IV, CIV), that cooperate to transfer electrons derived from NADH and succinate to molecular oxygen, creating an electrochemical gradient over the inner membrane that drives transmembrane transport and the ATP synthase. Cytochrome c oxidase is the component of the respiratory chain that catalyzes the reduction of oxygen to water. Electrons originating from reduced cytochrome c in the intermembrane space (IMS) are transferred via the dinuclear copper A center (CU(A)) of subunit 2 and heme A of subunit 1 to the active site in subunit 1, a binuclear center (BNC) formed by heme A3 and copper B (CU(B)). The BNC reduces molecular oxygen to 2 water molecules using 4 electrons from cytochrome c in the IMS and 4 protons from the mitochondrial matrix. The protein is Cytochrome c oxidase subunit 2 (MT-CO2) of Vulpes zerda (Fennec fox).